A 351-amino-acid polypeptide reads, in one-letter code: Translation initiation factor eIF2B subunit beta (351 aa).

Belongs to the eIF-2B alpha/beta/delta subunits family. As to quaternary structure, component of the translation initiation factor 2B (eIF2B) complex which is a heterodecamer of two sets of five different subunits: alpha, beta, gamma, delta and epsilon. Subunits alpha, beta and delta comprise a regulatory subcomplex and subunits epsilon and gamma comprise a catalytic subcomplex. Within the complex, the hexameric regulatory complex resides at the center, with the two heterodimeric catalytic subcomplexes bound on opposite sides.

Its subcellular location is the cytoplasm. It is found in the cytosol. With respect to regulation, activated by the chemical integrated stress response (ISR) inhibitor ISRIB which stimulates guanine nucleotide exchange factor activity for both phosphorylated and unphosphorylated eIF2. Its function is as follows. Acts as a component of the translation initiation factor 2B (eIF2B) complex, which catalyzes the exchange of GDP for GTP on eukaryotic initiation factor 2 (eIF2) gamma subunit. Its guanine nucleotide exchange factor activity is repressed when bound to eIF2 complex phosphorylated on the alpha subunit, thereby limiting the amount of methionyl-initiator methionine tRNA available to the ribosome and consequently global translation is repressed. This is Translation initiation factor eIF2B subunit beta (Eif2b2) from Rattus norvegicus (Rat).